Consider the following 344-residue polypeptide: Dihydroorotase (344 aa).

Zn(2+) contacts are provided by His-14 and His-16. Residues 16–18 (HLR) and Asn-42 contribute to the substrate site. 3 residues coordinate Zn(2+): Lys-100, His-137, and His-175. Lys-100 carries the post-translational modification N6-carboxylysine. Residue His-137 coordinates substrate. Position 220 (Leu-220) interacts with substrate. Asp-248 is a binding site for Zn(2+). The active site involves Asp-248. Substrate contacts are provided by His-252 and Ala-264.

Belongs to the metallo-dependent hydrolases superfamily. DHOase family. Class II DHOase subfamily. In terms of assembly, homodimer. It depends on Zn(2+) as a cofactor.

The enzyme catalyses (S)-dihydroorotate + H2O = N-carbamoyl-L-aspartate + H(+). It participates in pyrimidine metabolism; UMP biosynthesis via de novo pathway; (S)-dihydroorotate from bicarbonate: step 3/3. Functionally, catalyzes the reversible cyclization of carbamoyl aspartate to dihydroorotate. This is Dihydroorotase from Cupriavidus metallidurans (strain ATCC 43123 / DSM 2839 / NBRC 102507 / CH34) (Ralstonia metallidurans).